The chain runs to 353 residues: Immune-associated nucleotide-binding protein 8 (353 aa).

Positions 1–10 (MANDQKNSES) are enriched in polar residues. The tract at residues 1-43 (MANDQKNSESFPAKEDHKKDDAAAPAEVDHKDEFSASQPHPVE) is disordered. A compositionally biased stretch (basic and acidic residues) spans 12-34 (PAKEDHKKDDAAAPAEVDHKDEF). An AIG1-type G domain is found at 40 to 248 (HPVENIVLVG…YTDEMYHMIK (209 aa)). Positions 49 to 56 (GRTGNGKS) are G1. Residues 49-57 (GRTGNGKSA) and Ser70 each bind GTP. The segment at 76–80 (GVTME) is G2. A G3 region spans residues 98-101 (DTPG). Residues 168-171 (TGGD) are G4. The interval 207 to 209 (DNK) is G5. Residue Asn208 coordinates GTP. The stretch at 244–291 (YHMIKEENERHKKEQEELESKGHSEEQLAALMKELQIMNERNLKAMAE) forms a coiled coil.

This sequence belongs to the TRAFAC class TrmE-Era-EngA-EngB-Septin-like GTPase superfamily. AIG1/Toc34/Toc159-like paraseptin GTPase family. IAN subfamily. Mainly expressed in leaves.

The chain is Immune-associated nucleotide-binding protein 8 from Arabidopsis thaliana (Mouse-ear cress).